A 238-amino-acid polypeptide reads, in one-letter code: tRNA (guanine-N(7)-)-methyltransferase (238 aa).

The S-adenosyl-L-methionine site is built by glutamate 68, glutamate 93, aspartate 120, and aspartate 143. Residue aspartate 143 is part of the active site. Residues lysine 147, aspartate 179, and 216-219 (TKFE) each bind substrate.

The protein belongs to the class I-like SAM-binding methyltransferase superfamily. TrmB family.

The enzyme catalyses guanosine(46) in tRNA + S-adenosyl-L-methionine = N(7)-methylguanosine(46) in tRNA + S-adenosyl-L-homocysteine. The protein operates within tRNA modification; N(7)-methylguanine-tRNA biosynthesis. Functionally, catalyzes the formation of N(7)-methylguanine at position 46 (m7G46) in tRNA. This chain is tRNA (guanine-N(7)-)-methyltransferase, found in Shewanella amazonensis (strain ATCC BAA-1098 / SB2B).